A 391-amino-acid chain; its full sequence is 2,4,6-trihydroxybenzophenone synthase (391 aa).

Residue Cys-165 is part of the active site.

The protein belongs to the thiolase-like superfamily. Chalcone/stilbene synthases family. As to quaternary structure, homodimer. In terms of tissue distribution, expressed in young fruit pericarp.

It catalyses the reaction benzoyl-CoA + 3 malonyl-CoA + 2 H(+) = 2,4,6-trihydroxybenzophenone + 3 CO2 + 4 CoA. Functionally, type III polyketide synthase involved in the biosynthesis of benzophenones and xanthones. Produces mainly 2,4,6-trihydroxybenzophenone together with minor amounts of tetraketide lactone, triketide lactone and diketide lactone. The preferred substrate is benzoyl-CoA, but can also use acetyl-CoA, phenylacetyl-CoA, hexanoyl-CoA, cinnamoyl-CoA, p-coumaroyl-CoA and salicoyl-CoA. This is 2,4,6-trihydroxybenzophenone synthase (BPS) from Garcinia mangostana (Mangosteen).